Consider the following 701-residue polypeptide: Ephexin-1 (701 aa).

Basic and acidic residues-rich tracts occupy residues 1-11 (METKNSEDQGK) and 26-48 (GPAE…EEPR). The interval 1 to 141 (METKNSEDQG…TPEECPALTD (141 aa)) is disordered. The regulatory region; modulates activity toward RHOA, RAC1 and CDC42 stretch occupies residues 1–264 (METKNSEDQG…LDILQPEETK (264 aa)). Residues 120–132 (ASESSSTPGNGTT) show a composition bias toward polar residues. Position 172 is a phosphotyrosine (tyrosine 172). Residues 187 to 226 (RRQQDAEIQGNSDGSQAGEDNAEEEEEEEEEPASPPERRA) are disordered. The segment covering 206-218 (DNAEEEEEEEEEP) has biased composition (acidic residues). The 185-residue stretch at 264–448 (KLQEAMFELV…EMVVKACNEG (185 aa)) folds into the DH domain. Positions 480-592 (WLLKQGELQQ…WMTSLAPNRR (113 aa)) constitute a PH domain. In terms of domain architecture, SH3 spans 603–664 (LDCPQVQCVH…PSSMTEEILN (62 aa)). Positions 679–690 (HKMEDPQRSQNK) are enriched in basic and acidic residues. The segment at 679–701 (HKMEDPQRSQNKDRRKLGSRNRQ) is disordered. The segment covering 691–701 (DRRKLGSRNRQ) has biased composition (basic residues).

Interacts with CDK5R1 and EPHA4; activated by EPHA4 through the CDK5 kinase. Phosphorylation by CDK5 upon EPHA4 activation by EFNA1 may regulate dendritic spine morphogenesis. Src-dependent phosphorylation at Tyr-172 upon EPHA4 activation increases the guanine exchange factor activity toward RHOA. As to expression, expressed in telencephalic neurons (at protein level). Expressed in brain, spinal cord and testis.

Its subcellular location is the cytoplasm. The protein localises to the membrane. It is found in the cell projection. It localises to the growth cone. Its function is as follows. Acts as a guanine nucleotide exchange factor (GEF) which differentially activates the GTPases RHOA, RAC1 and CDC42. Plays a role in axon guidance regulating ephrin-induced growth cone collapse and dendritic spine morphogenesis. Upon activation by ephrin through EPHA4, the GEF activity switches toward RHOA resulting in its activation. Activated RHOA promotes cone retraction at the expense of RAC1- and CDC42-stimulated growth cone extension. This is Ephexin-1 (Ngef) from Rattus norvegicus (Rat).